A 434-amino-acid polypeptide reads, in one-letter code: Protein maelstrom homolog (434 aa).

Positions 4–73 form a DNA-binding region, HMG box; sequence RKASRNAYYF…AQGKDPGPSE (70 aa). The interval 357–385 is disordered; sequence SHFNSSNEEQRSNTPIGDYPSRAKISGQN.

This sequence belongs to the maelstrom family. Interacts with SMARCB1, SIN3B and DDX4. Interacts with piRNA-associated proteins TDRD1, PIWIL1 and PIWIL2. Interacts with TEX19. As to expression, testis-specific. Expressed in various cancer cell lines, probably due to demethylation of its promoter.

The protein resides in the cytoplasm. Its subcellular location is the nucleus. In terms of biological role, plays a central role during spermatogenesis by repressing transposable elements and preventing their mobilization, which is essential for the germline integrity. Acts via the piRNA metabolic process, which mediates the repression of transposable elements during meiosis by forming complexes composed of piRNAs and Piwi proteins and governs the methylation and subsequent repression of transposons. Its association with piP-bodies suggests a participation in the secondary piRNAs metabolic process. Required for the localization of germ-cell factors to the meiotic nuage. The chain is Protein maelstrom homolog (MAEL) from Homo sapiens (Human).